A 334-amino-acid chain; its full sequence is Succinate receptor 1 (334 aa).

The Extracellular segment spans residues 5–31 (MAWNATCKNWLAAEAALEKYYLSIFYG). A glycan (N-linked (GlcNAc...) asparagine) is linked at Asn8. A helical membrane pass occupies residues 32–52 (IEFVVGVLGNTIVVYGYIFSL). Residues 53 to 59 (KNWNSSN) lie on the Cytoplasmic side of the membrane. A helical transmembrane segment spans residues 60-80 (IYLFNLSVSDLAFLCTLPMLI). Topologically, residues 81-103 (RSYANGNWIYGDVLCISNRYVLH) are extracellular. A disulfide bond links Cys95 and Cys172. A helical transmembrane segment spans residues 104-124 (ANLYTSILFLTFISIDRYLII). Residues 125 to 137 (KYPFREHLLQKKE) lie on the Cytoplasmic side of the membrane. Residues 138–158 (FAILISLAIWVLVTLELLPIL) traverse the membrane as a helical segment. Over 159–185 (PLINPVITDNGTTCNDFASSGDPNYNL) the chain is Extracellular. The N-linked (GlcNAc...) asparagine glycan is linked to Asn168. The helical transmembrane segment at 186–206 (IYSMCLTLLGFLIPLFVMCFF) threads the bilayer. At 207–230 (YYKIALFLKQRNRQVATALPLEKP) the chain is on the cytoplasmic side. The helical transmembrane segment at 231-251 (LNLVIMAVVIFSVLFTPYHVM) threads the bilayer. At 252 to 281 (RNVRIASRLGSWKQYQCTQVVINSFYIVTR) the chain is on the extracellular side. A helical transmembrane segment spans residues 282–302 (PLAFLNSVINPVFYFLLGDHF). At 303–334 (RDMLMNQLRHNFKSLTSFSRWAHELLLSFREK) the chain is on the cytoplasmic side.

The protein belongs to the G-protein coupled receptor 1 family. In terms of tissue distribution, expressed specifically in kidney. Highly expressed in immature dendritic cells, expression rapidly downregulates after maturation. Also expressed in macrophages.

It is found in the cell membrane. G protein-coupled receptor for succinate able to mediate signaling through Gq/GNAQ or Gi/GNAI second messengers depending on the cell type and the processes regulated. Succinate-SUCNR1 signaling serves as a link between metabolic stress, inflammation and energy homeostasis. In macrophages, plays a range of immune-regulatory roles. During inflammation, succinate-SUCNR1 signaling may act as an anti-inflammatory mediator or boost inflammation depending on the inflammatory status of cells. Hyperpolarizes M2 macrophages versus M1 phenotype through Gq signaling by regulating the transcription of genes involved in immune function. In activated M1 macrophages, plays a pro-inflammatory role in response to LPS. Expressed in dendritic cells, where it is involved in the sensing of immunological danger and enhances immunity. Mediates succinate triggered intracelleular calcium mobilization, induces migratory responses and acts in synergy with Toll-like receptor ligands for the production of proinflammatory cytokines as well as an enhancement of antigen-specific activation of helper T cells. In the small intestine, mediates the activation of tuft cells by dietary succinate and triggers type 2 immunity. In adipocytes, plays an important role in the control of energy metabolism. In response to succinate, controls leptin expression in an AMPK-JNK-CEBPA-dependent as well as circadian clock-regulated manner. In muscle tissue, is expressed in non-muscle cells and coordinates muscle remodeling in response to the succinate produced during exercise training in a paracrine manner. In retina, acts as a mediator of vessel growth during retinal development. In response to succinate, regulates the production of angiogenic factors, including VEGF, by retinal ganglion neurons. The sequence is that of Succinate receptor 1 from Homo sapiens (Human).